The primary structure comprises 310 residues: Oxygen-dependent coproporphyrinogen-III oxidase (310 aa).

Ser92 is a substrate binding site. His96 and His106 together coordinate a divalent metal cation. His106 serves as the catalytic Proton donor. Residue 108–110 (NVR) coordinates substrate. Positions 145 and 175 each coordinate a divalent metal cation. The important for dimerization stretch occupies residues 240–275 (YVEFNLIWDRGTLFGLQSGGRTESILMSMPPLARWE). Position 258–260 (258–260 (GGR)) interacts with substrate.

Belongs to the aerobic coproporphyrinogen-III oxidase family. In terms of assembly, homodimer. Requires a divalent metal cation as cofactor.

The protein resides in the cytoplasm. It catalyses the reaction coproporphyrinogen III + O2 + 2 H(+) = protoporphyrinogen IX + 2 CO2 + 2 H2O. It participates in porphyrin-containing compound metabolism; protoporphyrin-IX biosynthesis; protoporphyrinogen-IX from coproporphyrinogen-III (O2 route): step 1/1. In terms of biological role, involved in the heme biosynthesis. Catalyzes the aerobic oxidative decarboxylation of propionate groups of rings A and B of coproporphyrinogen-III to yield the vinyl groups in protoporphyrinogen-IX. The protein is Oxygen-dependent coproporphyrinogen-III oxidase of Pectobacterium atrosepticum (strain SCRI 1043 / ATCC BAA-672) (Erwinia carotovora subsp. atroseptica).